The sequence spans 274 residues: Acetyl-coenzyme A carboxylase carboxyl transferase subunit alpha (274 aa).

Residues 2 to 250 (NKEFIKSIVV…KKELMNAMNE (249 aa)) enclose the CoA carboxyltransferase C-terminal domain.

This sequence belongs to the AccA family. As to quaternary structure, acetyl-CoA carboxylase is a heterohexamer composed of biotin carboxyl carrier protein (AccB), biotin carboxylase (AccC) and two subunits each of ACCase subunit alpha (AccA) and ACCase subunit beta (AccD).

It is found in the cytoplasm. It catalyses the reaction N(6)-carboxybiotinyl-L-lysyl-[protein] + acetyl-CoA = N(6)-biotinyl-L-lysyl-[protein] + malonyl-CoA. It participates in lipid metabolism; malonyl-CoA biosynthesis; malonyl-CoA from acetyl-CoA: step 1/1. Component of the acetyl coenzyme A carboxylase (ACC) complex. First, biotin carboxylase catalyzes the carboxylation of biotin on its carrier protein (BCCP) and then the CO(2) group is transferred by the carboxyltransferase to acetyl-CoA to form malonyl-CoA. The chain is Acetyl-coenzyme A carboxylase carboxyl transferase subunit alpha from Clostridium botulinum (strain Eklund 17B / Type B).